The following is a 73-amino-acid chain: UPF0435 protein lmo1707 (73 aa).

It belongs to the UPF0435 family.

This is UPF0435 protein lmo1707 from Listeria monocytogenes serovar 1/2a (strain ATCC BAA-679 / EGD-e).